The sequence spans 168 residues: G/U mismatch-specific DNA glycosylase (168 aa).

It belongs to the uracil-DNA glycosylase (UDG) superfamily. TDG/mug family. In terms of assembly, binds DNA as a monomer.

The protein resides in the cytoplasm. The catalysed reaction is Specifically hydrolyzes mismatched double-stranded DNA and polynucleotides, releasing free uracil.. Functionally, excises ethenocytosine and uracil, which can arise by alkylation or deamination of cytosine, respectively, from the corresponding mispairs with guanine in ds-DNA. It is capable of hydrolyzing the carbon-nitrogen bond between the sugar-phosphate backbone of the DNA and the mispaired base. The complementary strand guanine functions in substrate recognition. Required for DNA damage lesion repair in stationary-phase cells. The sequence is that of G/U mismatch-specific DNA glycosylase from Shigella dysenteriae serotype 1 (strain Sd197).